Consider the following 338-residue polypeptide: DNA-directed RNA polymerase subunit alpha (338 aa).

Residues 1–230 (MRKITTSAYM…QQMSVFKGIL (230 aa)) form an alpha N-terminal domain (alpha-NTD) region. Residues 247–338 (FSKLLSSVED…ELKSQMSAKE (92 aa)) are alpha C-terminal domain (alpha-CTD).

This sequence belongs to the RNA polymerase alpha chain family. In terms of assembly, homodimer. The RNAP catalytic core consists of 2 alpha, 1 beta, 1 beta' and 1 omega subunit. When a sigma factor is associated with the core the holoenzyme is formed, which can initiate transcription.

The catalysed reaction is RNA(n) + a ribonucleoside 5'-triphosphate = RNA(n+1) + diphosphate. Functionally, DNA-dependent RNA polymerase catalyzes the transcription of DNA into RNA using the four ribonucleoside triphosphates as substrates. This is DNA-directed RNA polymerase subunit alpha from Campylobacter concisus (strain 13826).